The chain runs to 254 residues: Tubulin-specific chaperone B (254 aa).

In terms of domain architecture, CAP-Gly spans 182–225 (PLPLDVMGTWCGVEFPEAAGKNDGRINGVTLFGPVAPGHGSFVR). Residues 234-254 (KDEESAEVEDVHDDVESDDEI) are disordered. The segment covering 237–254 (ESAEVEDVHDDVESDDEI) has biased composition (acidic residues).

Belongs to the TBCB family. As to quaternary structure, binds to monomeric alpha-tubulin.

The protein resides in the cytoplasm. Its subcellular location is the cytoskeleton. Acts to sequester alpha-tubulin from interaction with beta-tubulin, raising the possibility that it plays a regulatory role in the formation of the tubulin heterodimer. This is Tubulin-specific chaperone B (ALF1) from Saccharomyces cerevisiae (strain ATCC 204508 / S288c) (Baker's yeast).